The following is an 864-amino-acid chain: MIARYSFLQNFAEYIIDKLKKGIEVQIILPNNLLCLKLKQILIDKYKIKLPIIIPFNAIFFKKNESDYISKIEELFILSSIITEYKELPFNLEESLKSAEILRKLFNDLIINNIDIKLIEVYNNSNYWQKIYKFLEICFLKWKKAISLTQKYTKTIHEFNILQEEIIKIKKRDKRIILAGIFKPNVFFKKFEEELKDYIIHYNPSYNYISNNISYSEPNNIYEEAKQIAYICELNKDKHIAIVTNDNKLKKVYCNFLDQKYSDLLGNDLRRTNIGELLTAIIKIICNNFDLKLLFLLLKNPLINCHSVQKLELMLSNQNRFISSPKYLLQLQFENEELKEYCANLIDILFTNNPHNITGILTLTQEIAEKLLPTIWEKEEGEVLIEFLTNLISYSKHINLMNKKDFPKIFSFLLSNIKHYKNTDSSSIIIGQPEDLVLCRFDLIILPHFNNEHWSPNAKPHPLLSKKALQILNIDYNDAITTMLYTDYFNLLLQNKQIVILNAKKYNGKLSTSCNLFLRLQLKHVIPWFDPKLLTPATNSLDIKSQDDHKLTTISHSFPSVLSVTDIESLIRNPYGFYAKKILGLYKKDNIWEEPKISDFGNFIHKVLEKYSKNYDKQYVCLNLLDKQAALINIGNHILYSTILPAYTKKIWQIKLTAFSKTFILFDIERRKNCKEIYFEIKGELRLNIAGQNIKIIGIADRIEVSKSNDITILDYKTGTIPTKKEIEFGLSPQLIIECLMLLENGFNIKSFSNLETSQLSNIHIGRDTVICSRAQVVNPSYLKNYKSSCINKKLTIAYVRITSTEPYIQTTEIDLNIETLHKHKAGLIRLLEYYVTNKSFSYDFNLSNYNDYRHLTRCYYINS.

This is an uncharacterized protein from Rickettsia typhi (strain ATCC VR-144 / Wilmington).